We begin with the raw amino-acid sequence, 155 residues long: MGVSPVRDSWLVDEASDELISSERKLIAVECHDDDSQVINVKVEDICKDMSDKVVLKLQFRLCHKYRKLLDITLLGCRMKVYTQLKNTSLNSLKSLLQKRMINICIGNYAIGIRMFFVNINQFIKSCKWIVNTEDVYTICTLYHTRDTDVLNVIK.

This sequence belongs to the nanovirus U1 protein family.

The protein is Protein U1 (DNA-U1) of Cicer arietinum (Chickpea).